The sequence spans 127 residues: uncharacterized protein (127 aa).

The first 16 residues, 1–16, serve as a signal peptide directing secretion; that stretch reads MLKKIIFGITISLTTG. The N-palmitoyl cysteine moiety is linked to residue Cys-17. Cys-17 is lipidated: S-diacylglycerol cysteine. Residues 56 to 101 adopt a coiled-coil conformation; sequence EVREEIQKYRVEIVDINKKKRELYNRLSKEAQSFLAEQQKYKQKLS. The disordered stretch occupies residues 102-127; sequence IPKLLIENDPKNNTANSKDNNDKDMK.

It is found in the cell membrane. This is an uncharacterized protein from Rickettsia prowazekii (strain Madrid E).